An 861-amino-acid chain; its full sequence is Leucine--tRNA ligase (861 aa).

Residues 42 to 52 carry the 'HIGH' region motif; it reads PYPSGRLHMGH. The 'KMSKS' region motif lies at 619–623; it reads KMSKS. Position 622 (K622) interacts with ATP.

The protein belongs to the class-I aminoacyl-tRNA synthetase family.

It localises to the cytoplasm. The catalysed reaction is tRNA(Leu) + L-leucine + ATP = L-leucyl-tRNA(Leu) + AMP + diphosphate. This Haemophilus influenzae (strain PittEE) protein is Leucine--tRNA ligase.